The sequence spans 128 residues: Cystatin-12 (128 aa).

Positions 1 to 21 (MLWKSVLPVALIVLGIHDCSF) are cleaved as a signal peptide. 2 disulfide bridges follow: Cys-82/Cys-92 and Cys-105/Cys-125. An N-linked (GlcNAc...) asparagine glycan is attached at Asn-122.

The protein belongs to the cystatin family.

The protein resides in the secreted. Its function is as follows. May play a specialized role in spermatogenesis. The chain is Cystatin-12 (Cst12) from Rattus norvegicus (Rat).